We begin with the raw amino-acid sequence, 132 residues long: L-ectoine synthase (132 aa).

The protein belongs to the ectoine synthase family.

It carries out the reaction (2S)-4-acetamido-2-aminobutanoate = L-ectoine + H2O. Its pathway is amine and polyamine biosynthesis; ectoine biosynthesis; L-ectoine from L-aspartate 4-semialdehyde: step 3/3. Catalyzes the circularization of gamma-N-acetyl-alpha,gamma-diaminobutyric acid (ADABA) to ectoine (1,4,5,6-tetrahydro-2-methyl-4-pyrimidine carboxylic acid), which is an excellent osmoprotectant. The polypeptide is L-ectoine synthase (Alkalilimnicola ehrlichii (strain ATCC BAA-1101 / DSM 17681 / MLHE-1)).